We begin with the raw amino-acid sequence, 127 residues long: Fumarate reductase subunit C (127 aa).

A run of 3 helical transmembrane segments spans residues 30–50 (ATVL…GSLV), 58–78 (GWLS…ALLG), and 107–127 (IIVL…LMVV).

The protein belongs to the FrdC family. Part of an enzyme complex containing four subunits: a flavoprotein (FrdA), an iron-sulfur protein (FrdB), and two hydrophobic anchor proteins (FrdC and FrdD).

It is found in the cell inner membrane. In terms of biological role, anchors the catalytic components of the fumarate reductase complex to the cell membrane, binds quinones. The polypeptide is Fumarate reductase subunit C (Vibrio atlanticus (strain LGP32) (Vibrio splendidus (strain Mel32))).